Here is a 281-residue protein sequence, read N- to C-terminus: Putative phosphoenolpyruvate synthase regulatory protein (281 aa).

ADP is bound at residue 161–168 (GVSRSGKT).

This sequence belongs to the pyruvate, phosphate/water dikinase regulatory protein family. PSRP subfamily.

It catalyses the reaction [pyruvate, water dikinase] + ADP = [pyruvate, water dikinase]-phosphate + AMP + H(+). It carries out the reaction [pyruvate, water dikinase]-phosphate + phosphate + H(+) = [pyruvate, water dikinase] + diphosphate. In terms of biological role, bifunctional serine/threonine kinase and phosphorylase involved in the regulation of the phosphoenolpyruvate synthase (PEPS) by catalyzing its phosphorylation/dephosphorylation. In Herminiimonas arsenicoxydans, this protein is Putative phosphoenolpyruvate synthase regulatory protein.